A 157-amino-acid polypeptide reads, in one-letter code: LEATVSRNKKYKFTMGNVVRSWKCTVENKSNKTLYADGSTPVSGSMATVLTDIAPGGTGVFLWEQSKGAARGAVGVVYYRYEDKILSLMASIPYDWHLYNAWANARVSNKKESFSNLYNGYDGAQQPTIAGNWGEVDGTKFFLTDKSHAEFNVIFSG.

Positions 1 to 14 (LEATVSRNKKYKFT) are cleaved as a signal peptide. The short motif at 129 to 131 (IAG) is the Cell attachment site element.

The protein belongs to the actinoporin family. HALT subfamily. Octamer or nonamer in membranes. Monomer in the soluble state. In vitro, interacts with folate receptor alpha (of target organism).

Its subcellular location is the nematocyst. It is found in the secreted. The protein resides in the target cell membrane. Functionally, pore-forming protein that forms hydrophilic pores and causes cytolysis. Compared to equinatoxin-2 (AC P61914), it reveals lower cytolysis activity (5-12-fold difference, tested on erythrocytes), a larger pore size (probably 2-3 nm) and different affinity to membrane lipids (100-fold lower affinity to sphingomyelin). Binds to the two sphingolipids, lysophosphatidic acid (LPA) and sphingosine-1-phosphate (S1P). Does not bind (or only weakly) to sulfatides (SFT). Shows cytolytic activity on HeLa cells, with a different potency than its paralogs (from most potent to less potent: HALT-4&gt;HALT-6~HALT-1&gt;HALT-3&gt;HALT-7&gt;HALT-2). Pore formation is a multi-step process that involves specific recognition of membrane lipid by a protein aromatic residues rich region, firm binding to the membrane (mainly driven by hydrophobic interactions) accompanied by the transfer of the N-terminal region to the lipid-water interface and finally pore formation after oligomerization of monomers. In vitro, binds to the folate receptor alpha (FOLR1), a GPI-anchored membrane protein that plays a major role in the uptake of folate/folic acid into cells via endocytosis, suggesting a possible involvement of this receptor in the mechanism of HALT-1-induced cell lysis. In vivo, does not cause visible paralysis in larvae of the blowfly Sarcophaga faculata, the most common arthropod prey of Hydra. The protein is Hydra actinoporin-like toxin 3 of Hydra vulgaris (Hydra).